We begin with the raw amino-acid sequence, 392 residues long: F-box protein At5g65850 (392 aa).

In terms of domain architecture, F-box spans 29–78 (TEKSVQIPVDIIIEILLRLPAKSIATCRCVSKLWISVICRQDFTELFLTR).

In Arabidopsis thaliana (Mouse-ear cress), this protein is F-box protein At5g65850.